The sequence spans 92 residues: Transcription factor PRE4 (92 aa).

Residues 5–60 (KSRSRQTGASMITDEQINDLVLQLHRLLPELANNRRSGKVSASRVLQETCSYIRNL) form the bHLH domain.

Belongs to the bHLH protein family. Interacts with HFR1 and IBH1. As to expression, expressed in roots, leaves, stems and flowers.

Its subcellular location is the nucleus. Its function is as follows. Atypical and probable non DNA-binding bHLH transcription factor that integrates multiple signaling pathways to regulate cell elongation and plant development. Regulates light responses by binding and inhibiting the activity of the bHLH transcription factor HFR1, a critical regulator of light signaling and shade avoidance. May have a regulatory role in various aspects of gibberellin-dependent growth and development. The protein is Transcription factor PRE4 (PRE4) of Arabidopsis thaliana (Mouse-ear cress).